The sequence spans 212 residues: Negative modulator of initiation of replication (212 aa).

Interaction with DNA stretches follow at residues A113–V114 and R144–Y148.

This sequence belongs to the SeqA family. As to quaternary structure, homodimer. Polymerizes to form helical filaments.

The protein resides in the cytoplasm. Its function is as follows. Negative regulator of replication initiation, which contributes to regulation of DNA replication and ensures that replication initiation occurs exactly once per chromosome per cell cycle. Binds to pairs of hemimethylated GATC sequences in the oriC region, thus preventing assembly of replication proteins and re-initiation at newly replicated origins. Repression is relieved when the region becomes fully methylated. In Actinobacillus succinogenes (strain ATCC 55618 / DSM 22257 / CCUG 43843 / 130Z), this protein is Negative modulator of initiation of replication.